We begin with the raw amino-acid sequence, 343 residues long: Holliday junction branch migration complex subunit RuvB (343 aa).

Residues M1–Y186 form a large ATPase domain (RuvB-L) region. ATP is bound by residues L25, R26, G67, K70, T71, S72, E133–F135, R176, Y186, and R223. T71 contacts Mg(2+). The small ATPAse domain (RuvB-S) stretch occupies residues D187–G257. A head domain (RuvB-H) region spans residues A260–F343. DNA is bound by residues R296, R315, and R320.

The protein belongs to the RuvB family. As to quaternary structure, homohexamer. Forms an RuvA(8)-RuvB(12)-Holliday junction (HJ) complex. HJ DNA is sandwiched between 2 RuvA tetramers; dsDNA enters through RuvA and exits via RuvB. An RuvB hexamer assembles on each DNA strand where it exits the tetramer. Each RuvB hexamer is contacted by two RuvA subunits (via domain III) on 2 adjacent RuvB subunits; this complex drives branch migration. In the full resolvosome a probable DNA-RuvA(4)-RuvB(12)-RuvC(2) complex forms which resolves the HJ.

It is found in the cytoplasm. It catalyses the reaction ATP + H2O = ADP + phosphate + H(+). Functionally, the RuvA-RuvB-RuvC complex processes Holliday junction (HJ) DNA during genetic recombination and DNA repair, while the RuvA-RuvB complex plays an important role in the rescue of blocked DNA replication forks via replication fork reversal (RFR). RuvA specifically binds to HJ cruciform DNA, conferring on it an open structure. The RuvB hexamer acts as an ATP-dependent pump, pulling dsDNA into and through the RuvAB complex. RuvB forms 2 homohexamers on either side of HJ DNA bound by 1 or 2 RuvA tetramers; 4 subunits per hexamer contact DNA at a time. Coordinated motions by a converter formed by DNA-disengaged RuvB subunits stimulates ATP hydrolysis and nucleotide exchange. Immobilization of the converter enables RuvB to convert the ATP-contained energy into a lever motion, pulling 2 nucleotides of DNA out of the RuvA tetramer per ATP hydrolyzed, thus driving DNA branch migration. The RuvB motors rotate together with the DNA substrate, which together with the progressing nucleotide cycle form the mechanistic basis for DNA recombination by continuous HJ branch migration. Branch migration allows RuvC to scan DNA until it finds its consensus sequence, where it cleaves and resolves cruciform DNA. The sequence is that of Holliday junction branch migration complex subunit RuvB from Myxococcus xanthus (strain DK1622).